Here is a 690-residue protein sequence, read N- to C-terminus: Elongation factor G (690 aa).

Residues 8 to 283 (EKYRNIGIMA…AVVDYLPSPL (276 aa)) enclose the tr-type G domain. GTP contacts are provided by residues 17-24 (AHIDAGKT), 81-85 (DTPGH), and 135-138 (NKLD).

This sequence belongs to the TRAFAC class translation factor GTPase superfamily. Classic translation factor GTPase family. EF-G/EF-2 subfamily.

It localises to the cytoplasm. In terms of biological role, catalyzes the GTP-dependent ribosomal translocation step during translation elongation. During this step, the ribosome changes from the pre-translocational (PRE) to the post-translocational (POST) state as the newly formed A-site-bound peptidyl-tRNA and P-site-bound deacylated tRNA move to the P and E sites, respectively. Catalyzes the coordinated movement of the two tRNA molecules, the mRNA and conformational changes in the ribosome. This chain is Elongation factor G, found in Rhizorhabdus wittichii (strain DSM 6014 / CCUG 31198 / JCM 15750 / NBRC 105917 / EY 4224 / RW1) (Sphingomonas wittichii).